The primary structure comprises 340 residues: Photosystem II assembly lipoprotein Ycf48 (340 aa).

An N-terminal signal peptide occupies residues 1–26 (MTSVLGLLKPLKKAIAAIAVLVLCIG). Residue Cys-27 is the site of N-palmitoyl cysteine attachment. A lipid anchor (S-diacylglycerol cysteine) is attached at Cys-27.

The protein belongs to the Ycf48 family. As to quaternary structure, part of early PSII assembly complexes which includes D1 (psbA) and PsbI; not found in mature PSII. Binds to the lumenal side of PSII complexes. Interacts with YidC.

It is found in the cellular thylakoid membrane. Its function is as follows. A factor required for optimal assembly of photosystem II (PSII), acting in the early stages of PSII assembly. Also plays a role in replacement of photodamaged D1 (psbA). Assists YidC in synthesis of chlorophyll-binding proteins. The chain is Photosystem II assembly lipoprotein Ycf48 from Picosynechococcus sp. (strain ATCC 27264 / PCC 7002 / PR-6) (Agmenellum quadruplicatum).